Here is a 211-residue protein sequence, read N- to C-terminus: tRNA (guanine-N(7)-)-methyltransferase (211 aa).

Positions 44, 69, 96, and 118 each coordinate S-adenosyl-L-methionine. Residue D118 is part of the active site. K122 is a binding site for substrate. Residues 124–129 (RHEKRR) form an interaction with RNA region. Residues D154 and 191-194 (TEYE) each bind substrate.

Belongs to the class I-like SAM-binding methyltransferase superfamily. TrmB family.

The enzyme catalyses guanosine(46) in tRNA + S-adenosyl-L-methionine = N(7)-methylguanosine(46) in tRNA + S-adenosyl-L-homocysteine. It functions in the pathway tRNA modification; N(7)-methylguanine-tRNA biosynthesis. In terms of biological role, catalyzes the formation of N(7)-methylguanine at position 46 (m7G46) in tRNA. This Streptococcus pneumoniae (strain CGSP14) protein is tRNA (guanine-N(7)-)-methyltransferase.